The primary structure comprises 130 residues: MPNNYRLEKVSSLLKKEITLILQNDLENDLIRDHFVNISKIDLSGDLQHCKIYITSTAQEKVRTEIVENLNTAKSSIRHSLGKRIEMRRVPEIIFKDDVVLDKGLSVLKLLDELKNKNQNHNVEDKDAKS.

The protein belongs to the RbfA family. Monomer. Binds 30S ribosomal subunits, but not 50S ribosomal subunits or 70S ribosomes.

The protein localises to the cytoplasm. Functionally, one of several proteins that assist in the late maturation steps of the functional core of the 30S ribosomal subunit. Associates with free 30S ribosomal subunits (but not with 30S subunits that are part of 70S ribosomes or polysomes). Required for efficient processing of 16S rRNA. May interact with the 5'-terminal helix region of 16S rRNA. This is Ribosome-binding factor A from Prochlorococcus marinus (strain AS9601).